The following is a 930-amino-acid chain: Protein translocase subunit SecA (930 aa).

ATP contacts are provided by residues glutamine 87, glycine 105 to threonine 109, and aspartate 515. Positions 914, 916, 925, and 926 each coordinate Zn(2+).

The protein belongs to the SecA family. In terms of assembly, monomer and homodimer. Part of the essential Sec protein translocation apparatus which comprises SecA, SecYEG and auxiliary proteins SecDF-YajC and YidC. The cofactor is Zn(2+).

The protein resides in the cell inner membrane. It is found in the cytoplasm. The catalysed reaction is ATP + H2O + cellular proteinSide 1 = ADP + phosphate + cellular proteinSide 2.. Functionally, part of the Sec protein translocase complex. Interacts with the SecYEG preprotein conducting channel. Has a central role in coupling the hydrolysis of ATP to the transfer of proteins into and across the cell membrane, serving both as a receptor for the preprotein-SecB complex and as an ATP-driven molecular motor driving the stepwise translocation of polypeptide chains across the membrane. This Burkholderia thailandensis (strain ATCC 700388 / DSM 13276 / CCUG 48851 / CIP 106301 / E264) protein is Protein translocase subunit SecA.